The primary structure comprises 610 residues: UvrABC system protein C (610 aa).

The region spanning 19–97 (GAPGVYKMLD…IKRHKPRYNI (79 aa)) is the GIY-YIG domain. In terms of domain architecture, UVR spans 207 to 242 (EALIDRLAQRMEQAAQRLEFEKAARYRDQISNLRTV).

The protein belongs to the UvrC family. In terms of assembly, interacts with UvrB in an incision complex.

The protein localises to the cytoplasm. Functionally, the UvrABC repair system catalyzes the recognition and processing of DNA lesions. UvrC both incises the 5' and 3' sides of the lesion. The N-terminal half is responsible for the 3' incision and the C-terminal half is responsible for the 5' incision. This Methylococcus capsulatus (strain ATCC 33009 / NCIMB 11132 / Bath) protein is UvrABC system protein C.